Consider the following 343-residue polypeptide: Tetraacyldisaccharide 4'-kinase (343 aa).

53–60 (TCGGAGKT) lines the ATP pocket.

It belongs to the LpxK family.

It catalyses the reaction a lipid A disaccharide + ATP = a lipid IVA + ADP + H(+). The protein operates within glycolipid biosynthesis; lipid IV(A) biosynthesis; lipid IV(A) from (3R)-3-hydroxytetradecanoyl-[acyl-carrier-protein] and UDP-N-acetyl-alpha-D-glucosamine: step 6/6. In terms of biological role, transfers the gamma-phosphate of ATP to the 4'-position of a tetraacyldisaccharide 1-phosphate intermediate (termed DS-1-P) to form tetraacyldisaccharide 1,4'-bis-phosphate (lipid IVA). This chain is Tetraacyldisaccharide 4'-kinase, found in Bartonella quintana (strain Toulouse) (Rochalimaea quintana).